The chain runs to 470 residues: Xaa-Pro aminopeptidase 2 (470 aa).

The Mn(2+) site is built by aspartate 287, aspartate 299, histidine 382, glutamate 413, and glutamate 437.

This sequence belongs to the peptidase M24B family. Homodimer. Requires Mn(2+) as cofactor.

The enzyme catalyses Release of any N-terminal amino acid, including proline, that is linked to proline, even from a dipeptide or tripeptide.. The polypeptide is Xaa-Pro aminopeptidase 2 (pepP2) (Streptomyces coelicolor (strain ATCC BAA-471 / A3(2) / M145)).